Reading from the N-terminus, the 144-residue chain is Putative pre-16S rRNA nuclease (144 aa).

This sequence belongs to the YqgF nuclease family.

Its subcellular location is the cytoplasm. Functionally, could be a nuclease involved in processing of the 5'-end of pre-16S rRNA. The protein is Putative pre-16S rRNA nuclease of Oenococcus oeni (strain ATCC BAA-331 / PSU-1).